The chain runs to 153 residues: Aspartate carbamoyltransferase regulatory chain (153 aa).

Residues cysteine 109, cysteine 114, cysteine 138, and cysteine 141 each contribute to the Zn(2+) site.

It belongs to the PyrI family. As to quaternary structure, contains catalytic and regulatory chains. The cofactor is Zn(2+).

Functionally, involved in allosteric regulation of aspartate carbamoyltransferase. The polypeptide is Aspartate carbamoyltransferase regulatory chain (Vibrio vulnificus (strain YJ016)).